The sequence spans 275 residues: Transcription regulator AOL_s00215g275 (275 aa).

Disordered stretches follow at residues 13–65 (TPLP…SSIG) and 84–108 (ILQQ…RQRL). Positions 14–26 (PLPSLNSSRSPQR) are enriched in polar residues. Low complexity predominate over residues 27 to 40 (TPSLGSSSTSSLSP). Residues 47 to 60 (TPSTPESNDSGLTL) show a composition bias toward polar residues. Residues 88 to 106 (KSRHQNQPSRRHKQKNRRQ) are compositionally biased toward basic residues.

Functionally, regulatory protein; part of the gene cluster that mediates the biosynthesis of sesquiterpenyl epoxy-cyclohexenoids (SECs) such as anthrobotrisins and arthrosporols, metabolites that possess a novel hybrid carbon skeleton consisting of a polyketide-derived epoxycyclohexenol combined with a terpenoid-derived monocyclic sesquiterpenol substructure (PKS-PTS hybrid). The SEC pathway plays an important role for fungal soil colonization via decreasing fungal nematode-capturing ability. AOL_s00215g275 can perform multiple functions in fungal growth and development via regulating the SEC biosynthesis, TCA cycle, and septa formation. Also involved in inhibiting conidial formation, germination, and nematicidal activity but promotes trap production. Plays a role in fungal resistances and significantly regulates the fungal morphology and responses to chemical stressors such as cell-wall-perturbing agents (SDS and Congo red), osmotic agents (NaCl and sorbitol), or the oxidant H(2)O(2). The sequence is that of Transcription regulator AOL_s00215g275 from Arthrobotrys oligospora (strain ATCC 24927 / CBS 115.81 / DSM 1491) (Nematode-trapping fungus).